The sequence spans 487 residues: G-patch domain and KOW motifs-containing protein (487 aa).

Disordered regions lie at residues 65-121 (HKNR…PLLM), 181-232 (VKPL…TGSA), and 295-367 (KVHQ…RPEP). Positions 88–116 (AVLSQAVKELIEESRRAQEDNSETNQTLS) form a coiled coil. 2 stretches are compositionally biased toward basic and acidic residues: residues 96-106 (ELIEESRRAQE) and 200-209 (SALKHLEPQK). The region spanning 154 to 200 (VQQYGMAMLRGMGWKEGEGIGRTFKQDVKPLEQKLRPKGLGLGADRS) is the G-patch domain. The KOW 1 domain maps to 226-253 (GLGTGSAVQIQSGAYKDMYGKVEGIDPD). Basic and acidic residues-rich tracts occupy residues 295–333 (KVHQ…DVKL) and 352–367 (RSPE…RPEP). The KOW 2 domain occupies 428 to 455 (PKEEGEHVMVVLGKYRGMVGKILHRDKQ).

It belongs to the MOS2 family. In terms of assembly, component of the minor spliceosome, which splices U12-type introns.

The protein resides in the nucleus. Functionally, RNA-binding protein involved in pre-mRNA splicing. In Xenopus laevis (African clawed frog), this protein is G-patch domain and KOW motifs-containing protein (gpkow).